Reading from the N-terminus, the 103-residue chain is Small ribosomal subunit protein uS10 (103 aa).

It belongs to the universal ribosomal protein uS10 family. As to quaternary structure, part of the 30S ribosomal subunit.

Functionally, involved in the binding of tRNA to the ribosomes. The polypeptide is Small ribosomal subunit protein uS10 (Persephonella marina (strain DSM 14350 / EX-H1)).